Here is a 321-residue protein sequence, read N- to C-terminus: Beta-ketoacyl-[acyl-carrier-protein] synthase III (321 aa).

Residues cysteine 116 and histidine 248 contribute to the active site. Positions 249-253 (QANLR) are ACP-binding. Residue asparagine 278 is part of the active site.

It belongs to the thiolase-like superfamily. FabH family. In terms of assembly, homodimer.

Its subcellular location is the cytoplasm. It catalyses the reaction malonyl-[ACP] + acetyl-CoA + H(+) = 3-oxobutanoyl-[ACP] + CO2 + CoA. It functions in the pathway lipid metabolism; fatty acid biosynthesis. In terms of biological role, catalyzes the condensation reaction of fatty acid synthesis by the addition to an acyl acceptor of two carbons from malonyl-ACP. Catalyzes the first condensation reaction which initiates fatty acid synthesis and may therefore play a role in governing the total rate of fatty acid production. Possesses both acetoacetyl-ACP synthase and acetyl transacylase activities. Its substrate specificity determines the biosynthesis of branched-chain and/or straight-chain of fatty acids. This is Beta-ketoacyl-[acyl-carrier-protein] synthase III from Yersinia enterocolitica serotype O:8 / biotype 1B (strain NCTC 13174 / 8081).